A 508-amino-acid chain; its full sequence is Polyamine oxidase FMS1 (508 aa).

Belongs to the flavin monoamine oxidase family. FAD is required as a cofactor.

It carries out the reaction spermine + O2 + H2O = 3-aminopropanal + spermidine + H2O2. It catalyses the reaction spermidine + O2 + H2O = 3-aminopropanal + putrescine + H2O2. The enzyme catalyses N(1)-acetylspermine + O2 + H2O = 3-acetamidopropanal + spermidine + H2O2. The catalysed reaction is N(1)-acetylspermidine + O2 + H2O = 3-acetamidopropanal + putrescine + H2O2. It carries out the reaction N(8)-acetylspermidine + O2 + H2O = 4-acetamidobutanal + propane-1,3-diamine + H2O2. Functionally, involved in the production of beta-alanine, a precursor of pantothenic acid. Multicopy suppressor of fenpropimorph resistance. The polypeptide is Polyamine oxidase FMS1 (FMS1) (Saccharomyces cerevisiae (strain ATCC 204508 / S288c) (Baker's yeast)).